We begin with the raw amino-acid sequence, 157 residues long: MPRPTKFRRVEFFPENNYFVPWGKPKCEIHEVVLKVEELEAMRLKDIEELNQEQCAEKMEISRQTFQNIIDSARKKVAIALTEGKAIKISGGHYTTKLCKLKCIDCEEIYEINYEQDRHLCPNCGSEKVICNKKADFCRRWCKGQNRKEQYEESKNK.

Belongs to the UPF0251 family.

In Clostridium botulinum (strain Kyoto / Type A2), this protein is UPF0251 protein CLM_1546.